The sequence spans 309 residues: Palmitoyltransferase ZDHHC19 (309 aa).

Helical transmembrane passes span 29 to 49 (LFAA…FAFP) and 59 to 79 (WAFP…LVSL). Positions 112–162 (QWCPKCCFHRPPRTYHCPWCNICVEDFDHHCKWVNNCIGHRNFRFFMLLVL) constitute a DHHC domain. Cys142 functions as the S-palmitoyl cysteine intermediate in the catalytic mechanism. 2 consecutive transmembrane segments (helical) span residues 160–180 (LVLS…IFLV) and 193–213 (IAIV…LLLL). The segment covering 280 to 294 (LHPPMSPSALNPPAP) has biased composition (pro residues). Residues 280–309 (LHPPMSPSALNPPAPTSGSLQSREGTPGAW) form a disordered region.

This sequence belongs to the DHHC palmitoyltransferase family.

It localises to the golgi apparatus membrane. The protein resides in the cytoplasm. The protein localises to the perinuclear region. It carries out the reaction L-cysteinyl-[protein] + hexadecanoyl-CoA = S-hexadecanoyl-L-cysteinyl-[protein] + CoA. Its function is as follows. Palmitoyltransferase that mediates palmitoylation oproteins, such as RRAS and SQSTM1. Catalyzes palmitoylation of RRAS, leading to increased cell viability. Acts as a positive regulator of autophagy by mediating palmitoylation of SQSTM1, promoting affinity between SQSTM1 and ATG8 proteins and recruitment of ubiquitinated cargo proteins to autophagosomes. In terms of biological role, (Microbial infection) Promotes Chikungunya virus (CHIKV) replication by mediating viral nsp1 palmitoylation. The polypeptide is Palmitoyltransferase ZDHHC19 (Homo sapiens (Human)).